Consider the following 357-residue polypeptide: Aspartate carbamoyltransferase catalytic subunit (357 aa).

Polar residues predominate over residues 1-17 (MSNSIDSQSIPTISPTD). The tract at residues 1 to 21 (MSNSIDSQSIPTISPTDYTKF) is disordered. Carbamoyl phosphate contacts are provided by Arg-97 and Thr-98. L-aspartate is bound at residue Lys-125. Carbamoyl phosphate-binding residues include Arg-147, His-177, and Gln-180. L-aspartate is bound by residues Arg-211 and Arg-266. Carbamoyl phosphate contacts are provided by Gly-307 and Pro-308.

This sequence belongs to the aspartate/ornithine carbamoyltransferase superfamily. ATCase family. As to quaternary structure, heterododecamer (2C3:3R2) of six catalytic PyrB chains organized as two trimers (C3), and six regulatory PyrI chains organized as three dimers (R2).

It carries out the reaction carbamoyl phosphate + L-aspartate = N-carbamoyl-L-aspartate + phosphate + H(+). Its pathway is pyrimidine metabolism; UMP biosynthesis via de novo pathway; (S)-dihydroorotate from bicarbonate: step 2/3. Its function is as follows. Catalyzes the condensation of carbamoyl phosphate and aspartate to form carbamoyl aspartate and inorganic phosphate, the committed step in the de novo pyrimidine nucleotide biosynthesis pathway. In Psychrobacter arcticus (strain DSM 17307 / VKM B-2377 / 273-4), this protein is Aspartate carbamoyltransferase catalytic subunit.